The sequence spans 251 residues: Cell division protein ZapD (251 aa).

It belongs to the ZapD family. Interacts with FtsZ.

The protein localises to the cytoplasm. Its function is as follows. Cell division factor that enhances FtsZ-ring assembly. Directly interacts with FtsZ and promotes bundling of FtsZ protofilaments, with a reduction in FtsZ GTPase activity. The sequence is that of Cell division protein ZapD from Burkholderia cenocepacia (strain ATCC BAA-245 / DSM 16553 / LMG 16656 / NCTC 13227 / J2315 / CF5610) (Burkholderia cepacia (strain J2315)).